The following is a 98-amino-acid chain: NADH-ubiquinone oxidoreductase chain 4L (98 aa).

A run of 3 helical transmembrane segments spans residues 1 to 21, 29 to 49, and 61 to 81; these read MSLTYMNMFMAFTISLLGLLM, SLLCLEGMMLSLFVMMTMAIL, and IILLVFAACEAALGLSLLVMV.

Belongs to the complex I subunit 4L family. Core subunit of respiratory chain NADH dehydrogenase (Complex I) which is composed of 45 different subunits.

The protein localises to the mitochondrion inner membrane. It catalyses the reaction a ubiquinone + NADH + 5 H(+)(in) = a ubiquinol + NAD(+) + 4 H(+)(out). In terms of biological role, core subunit of the mitochondrial membrane respiratory chain NADH dehydrogenase (Complex I) which catalyzes electron transfer from NADH through the respiratory chain, using ubiquinone as an electron acceptor. Part of the enzyme membrane arm which is embedded in the lipid bilayer and involved in proton translocation. This is NADH-ubiquinone oxidoreductase chain 4L (MT-ND4L) from Vampyressa melissa (Melissa's yellow-eared bat).